The chain runs to 133 residues: Phosphoribosyl-AMP cyclohydrolase (133 aa).

D82 is a binding site for Mg(2+). C83 contributes to the Zn(2+) binding site. Residues D84 and D86 each contribute to the Mg(2+) site. Positions 99 and 106 each coordinate Zn(2+).

Belongs to the PRA-CH family. As to quaternary structure, homodimer. Mg(2+) is required as a cofactor. The cofactor is Zn(2+).

It is found in the cytoplasm. It carries out the reaction 1-(5-phospho-beta-D-ribosyl)-5'-AMP + H2O = 1-(5-phospho-beta-D-ribosyl)-5-[(5-phospho-beta-D-ribosylamino)methylideneamino]imidazole-4-carboxamide. The protein operates within amino-acid biosynthesis; L-histidine biosynthesis; L-histidine from 5-phospho-alpha-D-ribose 1-diphosphate: step 3/9. Catalyzes the hydrolysis of the adenine ring of phosphoribosyl-AMP. The sequence is that of Phosphoribosyl-AMP cyclohydrolase from Rhodospirillum centenum (strain ATCC 51521 / SW).